The sequence spans 468 residues: Squamosa promoter-binding-like protein 5 (468 aa).

The SBP-type zinc finger occupies 204 to 281 (PPRCQAEGCK…TEHNRRRRKP (78 aa)). The Zn(2+) site is built by cysteine 207, cysteine 212, cysteine 229, histidine 232, cysteine 248, cysteine 251, histidine 255, and cysteine 267. Positions 264 to 280 (KRSCRKRLTEHNRRRRK) match the Bipartite nuclear localization signal motif. 3 disordered regions span residues 270-305 (RLTE…DASI), 354-374 (TLSL…DGGL), and 405-458 (HHHL…SNNN). Positions 363–372 (QEEDDEDEDG) are enriched in acidic residues. Positions 438 to 458 (NNNNILSCSSASDQQNSSNNN) are enriched in low complexity.

In terms of tissue distribution, ubiquitous.

It localises to the nucleus. Functionally, trans-acting factor that binds specifically to the consensus nucleotide sequence 5'-TNCGTACAA-3'. The sequence is that of Squamosa promoter-binding-like protein 5 (SPL5) from Oryza sativa subsp. japonica (Rice).